Reading from the N-terminus, the 1149-residue chain is Guanine nucleotide exchange factor DBS (1149 aa).

The region spanning 52 to 224 (MATASDEIMH…DLGGTLDYCH (173 aa)) is the CRAL-TRIO domain. A Spectrin repeat occupies 355-454 (HFEQGFREVK…SEVTRRRDLL (100 aa)). Residues serine 457, serine 462, serine 471, and serine 480 each carry the phosphoserine modification. A coiled-coil region spans residues 503-528 (LETGAENKIQELNKIYKEYECILNQD). The tract at residues 555-627 (KKLAAKQTRP…RTSSTGEEEE (73 aa)) is disordered. The span at 583-594 (PGSWRSSENSSS) shows a compositional bias: low complexity. The segment covering 607–616 (AKSEMSEPRQ) has biased composition (basic and acidic residues). A Phosphoserine modification is found at serine 621. Threonine 622 carries the phosphothreonine modification. A DH domain is found at 632–812 (LRRHVMNELL…LGILKAVNDS (181 aa)). Residues 830-946 (KLLMQGSFSV…WVNEIRKVLT (117 aa)) enclose the PH domain. The segment at 956 to 1033 (SQHRALEQSH…EAPEEDGGWS (78 aa)) is disordered. Residues 964 to 978 (SHSLPLPTPASTSPT) show a composition bias toward low complexity. 4 positions are modified to phosphoserine: serine 1033, serine 1034, serine 1041, and serine 1042. In terms of domain architecture, SH3 spans 1055 to 1116 (LVPGKYTVLM…PASSLATLLG (62 aa)).

It belongs to the MCF2 family. As to quaternary structure, interacts with GTP-bound RAC1. Interacts with CDC42. Interacts with RHOA. Interacts with CCPG1, which results in specific inhibition of its exchange activity toward RHOA, but does not affect its activity on CDC42. In terms of processing, mainly phosphorylated on serine. In terms of tissue distribution, highest expression in the brain, where it is found in neurons and alpha-tanycytes (at protein level). Detected in brain, and at lower levels in the heart.

The protein localises to the cytoplasm. It localises to the cell membrane. Guanine nucleotide exchange factor that catalyzes guanine nucleotide exchange on RHOA and CDC42, and thereby contributes to the regulation of RHOA and CDC42 signaling pathways. Seems to lack activity with RAC1. Becomes activated and highly tumorigenic by truncation of the N-terminus. The chain is Guanine nucleotide exchange factor DBS (Mcf2l) from Rattus norvegicus (Rat).